The following is a 179-amino-acid chain: Inner membrane-spanning protein YciB (179 aa).

The next 5 membrane-spanning stretches (helical) occupy residues 22–42 (IYAA…YSWV), 50–70 (MALI…FFHN), 76–96 (WKVT…QWVM), 121–141 (LAWA…AFWL), and 149–169 (FKVF…GVYI).

It belongs to the YciB family.

It localises to the cell inner membrane. Plays a role in cell envelope biogenesis, maintenance of cell envelope integrity and membrane homeostasis. In Escherichia fergusonii (strain ATCC 35469 / DSM 13698 / CCUG 18766 / IAM 14443 / JCM 21226 / LMG 7866 / NBRC 102419 / NCTC 12128 / CDC 0568-73), this protein is Inner membrane-spanning protein YciB.